A 194-amino-acid polypeptide reads, in one-letter code: Holliday junction branch migration complex subunit RuvA (194 aa).

The tract at residues M1–M64 is domain I. The domain II stretch occupies residues T65–E140. A flexible linker region spans residues E140–A143. Residues A144–K194 form a domain III region.

Belongs to the RuvA family. As to quaternary structure, homotetramer. Forms an RuvA(8)-RuvB(12)-Holliday junction (HJ) complex. HJ DNA is sandwiched between 2 RuvA tetramers; dsDNA enters through RuvA and exits via RuvB. An RuvB hexamer assembles on each DNA strand where it exits the tetramer. Each RuvB hexamer is contacted by two RuvA subunits (via domain III) on 2 adjacent RuvB subunits; this complex drives branch migration. In the full resolvosome a probable DNA-RuvA(4)-RuvB(12)-RuvC(2) complex forms which resolves the HJ.

The protein resides in the cytoplasm. In terms of biological role, the RuvA-RuvB-RuvC complex processes Holliday junction (HJ) DNA during genetic recombination and DNA repair, while the RuvA-RuvB complex plays an important role in the rescue of blocked DNA replication forks via replication fork reversal (RFR). RuvA specifically binds to HJ cruciform DNA, conferring on it an open structure. The RuvB hexamer acts as an ATP-dependent pump, pulling dsDNA into and through the RuvAB complex. HJ branch migration allows RuvC to scan DNA until it finds its consensus sequence, where it cleaves and resolves the cruciform DNA. The protein is Holliday junction branch migration complex subunit RuvA of Nitrosomonas eutropha (strain DSM 101675 / C91 / Nm57).